Reading from the N-terminus, the 326-residue chain is Acyl-CoA-binding domain-containing protein 4 (326 aa).

Positions 10–99 (CQKQFQAAVS…MKLVAQKVID (90 aa)) constitute an ACB domain. Residues 21-30 (IQNLPKNGSY), 41-45 (YSYYK), Lys67, and Tyr86 contribute to the an acyl-CoA site. Disordered regions lie at residues 147–170 (VQAAPEPSHPPKEPAPPSPESRLP) and 223–248 (KEAAGRELTTRSSPESPEGFGGSLMG). Ser164 is subject to Phosphoserine.

Its function is as follows. Binds medium- and long-chain acyl-CoA esters and may function as an intracellular carrier of acyl-CoA esters. In Rattus norvegicus (Rat), this protein is Acyl-CoA-binding domain-containing protein 4 (Acbd4).